A 107-amino-acid chain; its full sequence is Nucleoid-associated protein R00231 (107 aa).

Belongs to the YbaB/EbfC family. As to quaternary structure, homodimer.

It localises to the cytoplasm. The protein localises to the nucleoid. Its function is as follows. Binds to DNA and alters its conformation. May be involved in regulation of gene expression, nucleoid organization and DNA protection. The sequence is that of Nucleoid-associated protein R00231 from Rhizobium meliloti (strain 1021) (Ensifer meliloti).